A 500-amino-acid chain; its full sequence is Glycerol kinase (500 aa).

Thr-16 contacts ADP. ATP contacts are provided by Thr-16 and Thr-17. Thr-16 is a sn-glycerol 3-phosphate binding site. Residue Arg-20 participates in ADP binding. Residues Arg-86, Glu-87, Tyr-138, and Asp-243 each contribute to the sn-glycerol 3-phosphate site. 5 residues coordinate glycerol: Arg-86, Glu-87, Tyr-138, Asp-243, and Gln-244. Residues Thr-265 and Gly-313 each coordinate ADP. ATP is bound by residues Thr-265, Gly-313, Gln-317, and Gly-414. ADP is bound by residues Gly-414 and Asn-418.

This sequence belongs to the FGGY kinase family.

It catalyses the reaction glycerol + ATP = sn-glycerol 3-phosphate + ADP + H(+). It functions in the pathway polyol metabolism; glycerol degradation via glycerol kinase pathway; sn-glycerol 3-phosphate from glycerol: step 1/1. Its activity is regulated as follows. Inhibited by fructose 1,6-bisphosphate (FBP). Key enzyme in the regulation of glycerol uptake and metabolism. Catalyzes the phosphorylation of glycerol to yield sn-glycerol 3-phosphate. This is Glycerol kinase from Trichormus variabilis (strain ATCC 29413 / PCC 7937) (Anabaena variabilis).